A 520-amino-acid chain; its full sequence is D-aminopeptidase (520 aa).

The Nucleophile role is filled by serine 62. Lysine 65 functions as the Proton donor/acceptor in the catalytic mechanism. Residues 477–487 (QRSMDAPSPGE) form an important for specificity region. Aspartate 481 is a substrate binding site.

Belongs to the peptidase S12 family. As to quaternary structure, homodimer.

It carries out the reaction Release of an N-terminal D-amino acid from a peptide, Xaa-|-Yaa-, in which Xaa is preferably D-Ala, D-Ser or D-Thr. D-amino acid amides and methyl esters also are hydrolyzed, as is glycine amide.. Inhibited by beta-lactam compounds such as 6-aminopenicillic acid, 7-aminocephalosporanic acid, benzylpenicillin and ampicillin. Inhibited by p-chloromercuribenzoate. In terms of biological role, hydrolyzes N-terminal residues in D-amino acid-containing peptides. This is D-aminopeptidase (dap) from Brucella anthropi (Ochrobactrum anthropi).